The sequence spans 540 residues: NADH-ubiquinone oxidoreductase chain 4 (540 aa).

Helical transmembrane passes span 2-22 (TIIA…GVIL), 35-55 (IFIL…LIGC), 89-109 (ISAI…LISI), 118-138 (QKFQ…FAAT), 140-160 (LVQL…MIGV), 172-192 (FQIL…IGIL), 218-238 (LIFI…PLHL), 248-268 (PTAG…YGYI), 282-302 (YFPI…IATL), 310-330 (IVAY…FSGV), 338-358 (IILM…IGVI), 376-396 (VMPI…AFPI), 415-435 (IIIA…SFWL), and 501-521 (VNIF…IIGM).

It belongs to the complex I subunit 4 family.

The protein localises to the mitochondrion membrane. The catalysed reaction is a ubiquinone + NADH + 5 H(+)(in) = a ubiquinol + NAD(+) + 4 H(+)(out). Core subunit of the mitochondrial membrane respiratory chain NADH dehydrogenase (Complex I) that is believed to belong to the minimal assembly required for catalysis. Complex I functions in the transfer of electrons from NADH to the respiratory chain. The immediate electron acceptor for the enzyme is believed to be ubiquinone. In Dictyostelium discoideum (Social amoeba), this protein is NADH-ubiquinone oxidoreductase chain 4 (nad4).